A 154-amino-acid polypeptide reads, in one-letter code: uncharacterized protein (154 aa).

The signal sequence occupies residues 1–19 (MWSLKSTLCIALLVTYSVA). ShKT domains follow at residues 67–102 (CADDPNTDCTQYTSLCSNAKYTPLLQQFCPKTCGFC) and 113–150 (CVDSSTNCANWEKNGFCSSTFYDCANKKQYCAKTCKLC). 6 disulfide bridges follow: Cys-67/Cys-102, Cys-75/Cys-95, Cys-82/Cys-99, Cys-113/Cys-150, Cys-120/Cys-143, and Cys-129/Cys-147.

This is an uncharacterized protein from Caenorhabditis elegans.